The primary structure comprises 102 residues: MQKARIKLSSTQHTELDGVCNQIKAIAEKTGVDMAGPIPLPTKALKVTTRKSTDGEGSSSFDRWTMRVHKRVIDIEADERTMKHIMKVRIPDTVQIEIELRN.

The protein belongs to the universal ribosomal protein uS10 family. Part of the 30S ribosomal subunit.

In terms of biological role, involved in the binding of tRNA to the ribosomes. This is Small ribosomal subunit protein uS10 from Methanococcus maripaludis (strain C5 / ATCC BAA-1333).